Reading from the N-terminus, the 186-residue chain is UPF0340 protein M6_Spy1622 (186 aa).

The protein belongs to the UPF0340 family.

The protein is UPF0340 protein M6_Spy1622 of Streptococcus pyogenes serotype M6 (strain ATCC BAA-946 / MGAS10394).